Consider the following 278-residue polypeptide: WIMGHMVNEIYQIDEFVDLGANSIETDITFDDNAMAEYSFHGVPCDCRRYCHKWEYINTFLDGLRRATTPGDSKFRKELALVVFDLKTGDLSSSTANKGGKLFGQKLLQHYWKGGNNGGRAYIILSIPDLDHYAFISGFKEALKTAGHEELLAKVGYDFSGNDDLGSTRTALNKAGVKDREHVWQSGGITNCVSTLFRGLDRVKKAVSNRDSSNGYINKVYHWTVDKYGSVRDALDAGVDGVMTNDPDVIVNVLNESKYKGKLRLATYDDNPWETFKP.

The active site involves H5. Mg(2+)-binding residues include E25 and D27. H41 (nucleophile) is an active-site residue. Intrachain disulfides connect C45-C51 and C47-C192. Position 85 (D85) interacts with Mg(2+).

Belongs to the arthropod phospholipase D family. Class II subfamily. It depends on Mg(2+) as a cofactor. In terms of tissue distribution, expressed by the venom gland.

It localises to the secreted. It carries out the reaction an N-(acyl)-sphingosylphosphocholine = an N-(acyl)-sphingosyl-1,3-cyclic phosphate + choline. It catalyses the reaction an N-(acyl)-sphingosylphosphoethanolamine = an N-(acyl)-sphingosyl-1,3-cyclic phosphate + ethanolamine. The catalysed reaction is a 1-acyl-sn-glycero-3-phosphocholine = a 1-acyl-sn-glycero-2,3-cyclic phosphate + choline. The enzyme catalyses a 1-acyl-sn-glycero-3-phosphoethanolamine = a 1-acyl-sn-glycero-2,3-cyclic phosphate + ethanolamine. Functionally, dermonecrotic toxins cleave the phosphodiester linkage between the phosphate and headgroup of certain phospholipids (sphingolipid and lysolipid substrates), forming an alcohol (often choline) and a cyclic phosphate. This toxin acts on sphingomyelin (SM). It may also act on ceramide phosphoethanolamine (CPE), lysophosphatidylcholine (LPC) and lysophosphatidylethanolamine (LPE), but not on lysophosphatidylserine (LPS), and lysophosphatidylglycerol (LPG). It acts by transphosphatidylation, releasing exclusively cyclic phosphate products as second products. Induces dermonecrosis, hemolysis, increased vascular permeability, edema, inflammatory response, and platelet aggregation. The polypeptide is Dermonecrotic toxin LhSicTox-alphaIV1iii (Loxosceles hirsuta (Recluse spider)).